Reading from the N-terminus, the 296-residue chain is Large ribosomal subunit protein uL15m (296 aa).

The N-terminal 21 residues, 1-21 (MAGPLQGGGARALDLLRGLPR), are a transit peptide targeting the mitochondrion. The disordered stretch occupies residues 22–66 (VSLANLKPNPGSKKPERRPRGRRRGRKCGRGHKGERQRGTRPRLG). Positions 36-52 (PERRPRGRRRGRKCGRG) are enriched in basic residues.

It belongs to the universal ribosomal protein uL15 family. In terms of assembly, component of the mitochondrial large ribosomal subunit (mt-LSU). Mature mammalian 55S mitochondrial ribosomes consist of a small (28S) and a large (39S) subunit. The 28S small subunit contains a 12S ribosomal RNA (12S mt-rRNA) and 30 different proteins. The 39S large subunit contains a 16S rRNA (16S mt-rRNA), a copy of mitochondrial valine transfer RNA (mt-tRNA(Val)), which plays an integral structural role, and 52 different proteins.

The protein resides in the mitochondrion. This chain is Large ribosomal subunit protein uL15m (MRPL15), found in Homo sapiens (Human).